The sequence spans 313 residues: Formimidoylglutamase (313 aa).

His-130, Asp-155, His-157, Asp-159, Asp-241, and Asp-243 together coordinate Mn(2+).

The protein belongs to the arginase family. Requires Mn(2+) as cofactor.

It carries out the reaction N-formimidoyl-L-glutamate + H2O = formamide + L-glutamate. The protein operates within amino-acid degradation; L-histidine degradation into L-glutamate; L-glutamate from N-formimidoyl-L-glutamate (hydrolase route): step 1/1. In terms of biological role, catalyzes the conversion of N-formimidoyl-L-glutamate to L-glutamate and formamide. This chain is Formimidoylglutamase, found in Salmonella paratyphi B (strain ATCC BAA-1250 / SPB7).